Reading from the N-terminus, the 251-residue chain is Phosphosulfolactate synthase (251 aa).

It belongs to the phosphosulfolactate synthase family. As to quaternary structure, homotrimer. The cofactor is Mg(2+).

The enzyme catalyses (2R)-O-phospho-3-sulfolactate = phosphoenolpyruvate + sulfite + H(+). Its pathway is cofactor biosynthesis; coenzyme M biosynthesis; sulfoacetaldehyde from phosphoenolpyruvate and sulfite: step 1/4. Catalyzes the addition of sulfite to phosphoenolpyruvate (PEP) to yield (2R)-phospho-3-sulfolactate (PSL). This chain is Phosphosulfolactate synthase (comA), found in Methanocaldococcus jannaschii (strain ATCC 43067 / DSM 2661 / JAL-1 / JCM 10045 / NBRC 100440) (Methanococcus jannaschii).